The primary structure comprises 754 residues: Disintegrin and metalloproteinase domain-containing protein 7 (754 aa).

The first 18 residues, 1 to 18, serve as a signal peptide directing secretion; that stretch reads MLPGCIFLMILLIPQVKE. A propeptide spanning residues 19–176 is cleaved from the precursor; it reads KFILGVEGQQ…NYSCTELNFT (158 aa). At 19-668 the chain is on the extracellular side; it reads KFILGVEGQQ…ACEETLHVTN (650 aa). Residues asparagine 84, asparagine 167, asparagine 174, and asparagine 184 are each glycosylated (N-linked (GlcNAc...) asparagine). The Peptidase M12B domain maps to 199 to 394; it reads KYVELFIVAD…YKPTCMLNIP (196 aa). 4 cysteine pairs are disulfide-bonded: cysteine 310-cysteine 389, cysteine 350-cysteine 373, cysteine 352-cysteine 357, and cysteine 460-cysteine 480. The Disintegrin domain occupies 402–488; the sequence is FQFCGNKKLD…ACPKDQFRVN (87 aa). N-linked (GlcNAc...) asparagine glycosylation is found at asparagine 584 and asparagine 668. The chain crosses the membrane as a helical span at residues 669–689; it reads ITILVVVLVLVIVGIGVLILL. Residues 690–754 are Cytoplasmic-facing; that stretch reads VRYRKCIKLK…GIADPNQSAK (65 aa).

In terms of assembly, interacts with ITM2B in sperm; the interaction increases following capacitation. Interacts with HSPA5 and CANX.

Its subcellular location is the membrane. In terms of biological role, required for normal male fertility via maintenance of epithelial cell morphology in the caput epididymis and subsequently correct epididymis lumen structure required for sperm development. Plays a role in sperm motility, flagella morphology and tyrosine phosphorylation during sperm capacitance. Plays a role in normal expression levels of HSPA5, ITM2B and ADAM2 in sperm both prior to and post-capacitation. This is a non catalytic metalloprotease-like protein. The protein is Disintegrin and metalloproteinase domain-containing protein 7 of Homo sapiens (Human).